The primary structure comprises 237 residues: uncharacterized protein (237 aa).

This sequence belongs to the bactofilin family.

This is an uncharacterized protein from Bacillus subtilis (strain 168).